The chain runs to 290 residues: Lipoyl synthase 2 (290 aa).

[4Fe-4S] cluster is bound by residues cysteine 37, cysteine 42, cysteine 48, cysteine 63, cysteine 67, cysteine 70, and serine 283. Positions 49–272 (YGQKTATFLL…GNIARELGFS (224 aa)) constitute a Radical SAM core domain.

The protein belongs to the radical SAM superfamily. Lipoyl synthase family. It depends on [4Fe-4S] cluster as a cofactor.

It is found in the cytoplasm. The enzyme catalyses [[Fe-S] cluster scaffold protein carrying a second [4Fe-4S](2+) cluster] + N(6)-octanoyl-L-lysyl-[protein] + 2 oxidized [2Fe-2S]-[ferredoxin] + 2 S-adenosyl-L-methionine + 4 H(+) = [[Fe-S] cluster scaffold protein] + N(6)-[(R)-dihydrolipoyl]-L-lysyl-[protein] + 4 Fe(3+) + 2 hydrogen sulfide + 2 5'-deoxyadenosine + 2 L-methionine + 2 reduced [2Fe-2S]-[ferredoxin]. Its pathway is protein modification; protein lipoylation via endogenous pathway; protein N(6)-(lipoyl)lysine from octanoyl-[acyl-carrier-protein]: step 2/2. In terms of biological role, catalyzes the radical-mediated insertion of two sulfur atoms into the C-6 and C-8 positions of the octanoyl moiety bound to the lipoyl domains of lipoate-dependent enzymes, thereby converting the octanoylated domains into lipoylated derivatives. This Thermosynechococcus vestitus (strain NIES-2133 / IAM M-273 / BP-1) protein is Lipoyl synthase 2.